The primary structure comprises 951 residues: Metal transporter CNNM1 (951 aa).

The chain crosses the membrane as a helical span at residues 23-43 (AVLLLFFSLSPRPPAAAAWLL). The tract at residues 116 to 135 (GGVAPSAVPTRPPGPQRCRE) is disordered. The CNNM transmembrane domain occupies 218–414 (LLPPAWLRAL…DPYSDLVKEE (197 aa)). A run of 3 helical transmembrane segments spans residues 222–242 (AWLR…FSGL), 282–302 (LLCT…GWLY), and 321–341 (IHFP…GAEI). 2 CBS domains span residues 433 to 495 (LTPL…CTPL) and 502 to 568 (YNRP…ILDE). Composition is skewed to polar residues over residues 731–740 (SRCSGLNRSE) and 814–824 (KAPTTRGTPQT). 2 disordered regions span residues 731-753 (SRCS…GGSN) and 795-830 (MDSS…DDPA). A phosphothreonine mark is found at threonine 821 and threonine 824. Serine 850 carries the post-translational modification Phosphoserine. The segment at 920–951 (KLLRTLSGQKRKRSPEGERTSEDNSNLTPLIT) is disordered. The span at 942–951 (DNSNLTPLIT) shows a compositional bias: polar residues.

This sequence belongs to the ACDP family. As to expression, restricted to brain and testis.

The protein localises to the cell membrane. In terms of biological role, probable metal transporter. The protein is Metal transporter CNNM1 (CNNM1) of Homo sapiens (Human).